The primary structure comprises 1364 residues: ABC-type transporter cns4 (1364 aa).

The ABC transporter 1 domain maps to 42–290 (SRVKESRAKP…MEEMGFLYTD (249 aa)). N-linked (GlcNAc...) asparagine glycans are attached at residues asparagine 152 and asparagine 214. A run of 5 helical transmembrane segments spans residues 435–455 (LFFAVLLNALLSMSEVTGSFA), 483–503 (IPLIAMQVTLFALPVYWMTGL), 508–528 (EAFLTYWIITISVTMCMTALF), 540–560 (AAIKVTGFLMSALIMYTGFLI), and 567–587 (PWLGWIFWINPLAYGYEAVLS). Asparagine 610 carries N-linked (GlcNAc...) asparagine glycosylation. A helical transmembrane segment spans residues 650–670 (FAIVWVWWALFVILTVYFTSN). Asparagine 689, asparagine 711, and asparagine 739 each carry an N-linked (GlcNAc...) asparagine glycan. The disordered stretch occupies residues 697 to 732 (DEEVGSGPDSHDSRNRSGISPIGDKQETSTDGPSKI). An ABC transporter 2 domain is found at 737 to 985 (IRNTSVFTWK…TVNEYFGRNG (249 aa)). ATP is bound at residue 779–786 (GSSGAGKT). 6 helical membrane passes run 1076 to 1094 (LMLHITSGLLNGFSFWKIG), 1105 to 1125 (FTIFNFIFVAPGVIAQLQPLF), 1146 to 1166 (AFATGLIVSELPYLVVCAVVY), 1185 to 1205 (AVFFVVLMYEFIYTGIGQAIA), 1211 to 1231 (AIFAVLINPLIIAILVFFCGV), and 1245 to 1265 (WLYYLDPFNYLMGSLLIFTTF).

The protein belongs to the ABC transporter superfamily. ABCG family. PDR (TC 3.A.1.205) subfamily.

It localises to the cell membrane. ABC-type transporter; part of the gene cluster that mediates the biosynthesis of cordycepin (COR) and pentostatin (PTN), two adenosine analogs with related bioactivity profiles as both mimic adenosine and can inhibit some of the processes that are adenosine dependent. Mediates the pumping of pentostatin but not of cordycepin out of fungal cells. Decreasing intracellular pentostatin releases adenosine deaminase (ADA) inhibition, allowing ADA to deaminate cordycepin into non-toxic 3'-d. The sequence is that of ABC-type transporter cns4 from Cordyceps militaris (strain CM01) (Caterpillar fungus).